A 673-amino-acid chain; its full sequence is MVLPKPEMPFFVLLLFLGLGCLRPAAATDERFVFNGFTGANLSFDGMATVTSNGLLMLTNGTNQLKGHAFFPSPLQFQRGPNSTAMQSFSTAFVIGIIGAFEDLSSHGMAFIIAKSKNLTSALPGQFMGLVNSANNGNATNHLFAVEFDTILNSEFNDMSGNHVGIDVNGLNSVDADNAGYYDDGTGDFKNMSLVSRRPMQVWVDFDGQTMQVNVTMAPLEVARPKKPLLSKIVNISSVIDDTAYVGFSSATGILFCRHYVLGWSFKMNGAAPALNISSLPSLPVTFPKPRSKTLEIVLPIASAVLVFAVAAAVFVFMRRRRMFSELKEEWEVTFGPHRFSYKDLFHATDGFSDKRLLGIGGFGRVYRGVLPSSKAEVAVKKVAHGSRQGMREFVAEVVSIGRLRHRNLVQLLGYCRRKGELLLVYDYMPNGSLDKQLYDQGKITLRWAQRFRIIRGVASGLLYLHEDWEQVVVHRDIKASNVLLDADMNGRLGDFGLARLYDHGTDPHTTHVVGTMGYLAPELGHTGKASKASDVFAFGAFMLEVACGRKPVAQDARDNRVVLVDWVLDRWRAGAITDTVDPRLHGDFVESEASLVLRLGLLCSHPLPGARPGTRQLVQYLEGDVPLPELSPTYQSFNMLALMQDQGFDPYVMSYPMTSTSAGTFSDLSGGR.

An N-terminal signal peptide occupies residues 1–27 (MVLPKPEMPFFVLLLFLGLGCLRPAAA). At 28–296 (TDERFVFNGF…FPKPRSKTLE (269 aa)) the chain is on the extracellular side. The legume-lectin like stretch occupies residues 32 to 270 (FVFNGFTGAN…VLGWSFKMNG (239 aa)). N-linked (GlcNAc...) asparagine glycosylation is found at N41, N60, N82, N118, N138, N191, N214, N235, and N276. Residues 297 to 317 (IVLPIASAVLVFAVAAAVFVF) form a helical membrane-spanning segment. The Cytoplasmic segment spans residues 318-673 (MRRRRMFSEL…GTFSDLSGGR (356 aa)). The Protein kinase domain occupies 352–631 (FSDKRLLGIG…LEGDVPLPEL (280 aa)). Residues 358–366 (LGIGGFGRV) and K381 each bind ATP. The active-site Proton acceptor is D477.

In the C-terminal section; belongs to the protein kinase superfamily. Ser/Thr protein kinase family. It in the N-terminal section; belongs to the leguminous lectin family. Mainly expressed in root epidermal cells.

The protein resides in the cell membrane. It catalyses the reaction L-seryl-[protein] + ATP = O-phospho-L-seryl-[protein] + ADP + H(+). The catalysed reaction is L-threonyl-[protein] + ATP = O-phospho-L-threonyl-[protein] + ADP + H(+). Its function is as follows. Lectin-domain containing receptor kinase involved in salt stress response. Acts as a negative regulator of salt tolerance. The chain is L-type lectin-domain containing receptor kinase SIT2 from Oryza sativa subsp. japonica (Rice).